Consider the following 510-residue polypeptide: Putative thymidine phosphorylase (510 aa).

This sequence belongs to the thymidine/pyrimidine-nucleoside phosphorylase family. Type 2 subfamily.

It carries out the reaction thymidine + phosphate = 2-deoxy-alpha-D-ribose 1-phosphate + thymine. The protein is Putative thymidine phosphorylase of Nitrobacter hamburgensis (strain DSM 10229 / NCIMB 13809 / X14).